The primary structure comprises 883 residues: 3-hydroxy-3-methylglutaryl-coenzyme A reductase (883 aa).

At 1–9 (MLSRLFRMH) the chain is on the cytoplasmic side. Residues 10 to 39 (GQFVASHPWEVIVGTVTLTICMMSMNMFTG) form a helical membrane-spanning segment. The Lumenal portion of the chain corresponds to 40-56 (NDKICGWNYACPKFEED). Residues 57 to 78 (VLSSDIIILTITRCIAILYIYF) traverse the membrane as a helical segment. The Cytoplasmic segment spans residues 79–89 (QFQNLRQLGSK). The chain crosses the membrane as a helical span at residues 90–114 (YILGIAGLFTIFSSFVFSTVVIHFL). Over 115-123 (DKELTGLNE) the chain is Lumenal. A helical transmembrane segment spans residues 124-149 (ALPFFLLLIDLSKASALAKFALSSNS). Over 150 to 159 (QDEVRDNIAR) the chain is Cytoplasmic. A helical membrane pass occupies residues 160-187 (GMAILGPTFTLEALVECLVIGVGTMSGV). Over 188-191 (RQLE) the chain is Lumenal. A helical membrane pass occupies residues 192 to 220 (IMCCFGCMSVLANYFAFMTFFPACVSLVL). At 221 to 249 (ELSRESREGRPIWQLSQFASVLEEEEDNK) the chain is on the cytoplasmic side. A helical transmembrane segment spans residues 250 to 276 (PNPVTQRVKMIMSLGLVLVHAHSRWIS). Residues 277–316 (EPSSQNSTSISDHEVTTMLDDMMPKRVEPSMPLWQFYLSR) lie on the Lumenal side of the membrane. Asn-282 is a glycosylation site (N-linked (GlcNAc...) asparagine). The chain crosses the membrane as a helical span at residues 317–341 (MVTMDVEQIITLGLALLLAVKYIFF). Over 342–883 (EQTETESTFS…LPGTCTKKAA (542 aa)) the chain is Cytoplasmic. The tract at residues 373 to 396 (REPEQEKTVHVSTTEEASSKEETE) is disordered. Residues Glu-554, Lys-686, and Asp-762 each act as charge relay system in the active site. The active-site Proton donor is His-861.

It belongs to the HMG-CoA reductase family. As to quaternary structure, homotetramer. Homodimer.

The protein localises to the endoplasmic reticulum membrane. It is found in the peroxisome membrane. It catalyses the reaction (R)-mevalonate + 2 NADP(+) + CoA = (3S)-3-hydroxy-3-methylglutaryl-CoA + 2 NADPH + 2 H(+). It functions in the pathway metabolic intermediate biosynthesis; (R)-mevalonate biosynthesis; (R)-mevalonate from acetyl-CoA: step 3/3. Functionally, catalyzes the conversion of (3S)-hydroxy-3-methylglutaryl-CoA (HMG-CoA) to mevalonic acid, the rate-limiting step in the synthesis of cholesterol and other isoprenoids, thus plays a critical role in cellular cholesterol homeostasis. In Xenopus laevis (African clawed frog), this protein is 3-hydroxy-3-methylglutaryl-coenzyme A reductase (hmgcr).